Reading from the N-terminus, the 428-residue chain is UPF0229 protein YeaH (428 aa).

Positions 78–90 (GNDHFIQNDRIER) are enriched in basic and acidic residues. The interval 78-111 (GNDHFIQNDRIERPQGGGGGGSGSGQGQASQDGE) is disordered. The segment covering 92–103 (QGGGGGGSGSGQ) has biased composition (gly residues).

Belongs to the UPF0229 family.

The sequence is that of UPF0229 protein YeaH from Salmonella choleraesuis (strain SC-B67).